Here is a 62-residue protein sequence, read N- to C-terminus: Potassium channel toxin kappa-KTx 1.4 (62 aa).

An N-terminal signal peptide occupies residues 1 to 26; it reads MKSCLINVSLLILLLLPILGYASVNA. A propeptide spanning residues 27–38 is cleaved from the precursor; the sequence is ESIDGENDFEEE. 2 disulfides stabilise this stretch: Cys43-Cys61 and Cys47-Cys57.

It belongs to the short scorpion toxin superfamily. Potassium channel inhibitor kappa-KTx family. Kappa-KTx 1 subfamily. In terms of tissue distribution, expressed by the venom gland.

The protein resides in the secreted. Its function is as follows. Shows structural homology with WaTx suggesting that it acts as a cell-penetrating peptide (CPP) with defensive purpose that induces pain by specifically activating mammalian sensory neuron TRPA1 channels. Has no effect on the voltage-gated potassium channels tested. This is Potassium channel toxin kappa-KTx 1.4 from Heterometrus petersii (Asian forest scorpion).